The following is a 209-amino-acid chain: Urease accessory protein UreG (209 aa).

Residue 14–21 (GPVGSGKT) participates in GTP binding.

Belongs to the SIMIBI class G3E GTPase family. UreG subfamily. As to quaternary structure, homodimer. UreD, UreF and UreG form a complex that acts as a GTP-hydrolysis-dependent molecular chaperone, activating the urease apoprotein by helping to assemble the nickel containing metallocenter of UreC. The UreE protein probably delivers the nickel.

It is found in the cytoplasm. Functionally, facilitates the functional incorporation of the urease nickel metallocenter. This process requires GTP hydrolysis, probably effectuated by UreG. In Rhodopseudomonas palustris (strain ATCC BAA-98 / CGA009), this protein is Urease accessory protein UreG.